Consider the following 128-residue polypeptide: Large ribosomal subunit protein bL19 (128 aa).

Belongs to the bacterial ribosomal protein bL19 family.

In terms of biological role, this protein is located at the 30S-50S ribosomal subunit interface and may play a role in the structure and function of the aminoacyl-tRNA binding site. The polypeptide is Large ribosomal subunit protein bL19 (Verminephrobacter eiseniae (strain EF01-2)).